The sequence spans 305 residues: Serine/threonine-protein phosphatase PP1-delta (305 aa).

Mn(2+)-binding residues include Asp-62, His-64, Asp-90, and Asn-122. His-123 functions as the Proton donor in the catalytic mechanism. Mn(2+) contacts are provided by His-172 and His-247.

The protein belongs to the PPP phosphatase family. As to expression, expressed in male germline including spermatocytes, spermatids and spermatozoa.

It is found in the chromosome. It localises to the cell projection. The protein resides in the pseudopodium. Its subcellular location is the cytoplasm. The catalysed reaction is O-phospho-L-seryl-[protein] + H2O = L-seryl-[protein] + phosphate. The enzyme catalyses O-phospho-L-threonyl-[protein] + H2O = L-threonyl-[protein] + phosphate. Functionally, probable phosphatase which plays a redundant role with gsp-4 in spermatogenesis by regulating sister chromatid segregation during meiosis. In addition, involved in sperm motility by controlling the dynamic disassembly of major sperm proteins (MSP) in the spermatozoan pseudopodium. The chain is Serine/threonine-protein phosphatase PP1-delta from Caenorhabditis elegans.